A 393-amino-acid chain; its full sequence is 4-O-methyl-glucuronoyl methylesterase (393 aa).

Positions 1-19 (MKLSAALLAIAAFANVASA) are cleaved as a signal peptide. Q20 is modified (pyrrolidone carboxylic acid). A disulfide bond links C22 and C56. Residues N103 and N168 are each glycosylated (N-linked (GlcNAc...) asparagine). A GXSYXG catalytic site motif motif is present at residues 203 to 208 (GCSRNG). Intrachain disulfides connect C204-C340 and C236-C312. S205 acts as the Nucleophile in catalysis. The substrate site is built by K209, Q251, E259, and W303. H339 acts as the Proton donor/acceptor in catalysis.

This sequence belongs to the carbohydrate esterase 15 (CE15) family.

Its subcellular location is the secreted. It catalyses the reaction a 4-O-methyl-alpha-D-glucuronosyl ester derivative + H2O = 4-O-methyl-alpha-D-glucuronate derivative + an alcohol + H(+). Its function is as follows. Glucuronoyl esterase which may play a significant role in biomass degradation, as it is considered to disconnect hemicellulose from lignin through the hydrolysis of the ester bond between 4-O-methyl-D-glucuronic acid residues of glucuronoxylans and aromatic alcohols of lignin. The sequence is that of 4-O-methyl-glucuronoyl methylesterase from Schizophyllum commune (strain H4-8 / FGSC 9210) (Split gill fungus).